Here is a 291-residue protein sequence, read N- to C-terminus: MAENRYELNKNLAQMLKGGVIMDVQNPEQARIAEAAGAAAVMALERIPADIRAVGGVSRMSDPKMIKEIQGAVSIPVMAKVRIGHFVEAQILEAIEIDYIDESEVLSPADNRFHVDKKEFQVPFVCGAKDLGEALRRIAEGASMIRTKGEPGTGDIVQAVRHMRMMSQEIRRIQNLREDELYVAAKDLQVPVELVQYVHKHGKLPVVNFAAGGIATPADAALMMQLGAEGVFVGSGIFKSGDPIKRASAIVKAVTNYRNPQILAQISEDLGEAMVGINENEIQILMAERGK.

Asp23 provides a ligand contact to D-ribose 5-phosphate. Residue Lys80 is the Schiff-base intermediate with D-ribose 5-phosphate of the active site. Gly152 provides a ligand contact to D-ribose 5-phosphate. Position 164 (Arg164) interacts with D-glyceraldehyde 3-phosphate. D-ribose 5-phosphate contacts are provided by residues Gly213 and 234–235; that span reads GS.

The protein belongs to the PdxS/SNZ family. In the presence of PdxT, forms a dodecamer of heterodimers.

It carries out the reaction aldehydo-D-ribose 5-phosphate + D-glyceraldehyde 3-phosphate + L-glutamine = pyridoxal 5'-phosphate + L-glutamate + phosphate + 3 H2O + H(+). Its pathway is cofactor biosynthesis; pyridoxal 5'-phosphate biosynthesis. Catalyzes the formation of pyridoxal 5'-phosphate from ribose 5-phosphate (RBP), glyceraldehyde 3-phosphate (G3P) and ammonia. The ammonia is provided by the PdxT subunit. Can also use ribulose 5-phosphate and dihydroxyacetone phosphate as substrates, resulting from enzyme-catalyzed isomerization of RBP and G3P, respectively. This chain is Pyridoxal 5'-phosphate synthase subunit PdxS, found in Haemophilus influenzae (strain ATCC 51907 / DSM 11121 / KW20 / Rd).